A 229-amino-acid polypeptide reads, in one-letter code: Synaptogyrin-3 (229 aa).

M1 carries the N-acetylmethionine modification. An MARVEL domain is found at 20–172; sequence FARRPQTLLR…LTVKALQRFR (153 aa). Helical transmembrane passes span 30-50, 70-90, 105-125, and 148-168; these read VVSWVFSIAVFGPIVNEGYVN, FGVVLGLGAFIACVAFLLLDV, VLLDLGFSGVWSFLWFVGFCF, and AAIAFSFFSILSWVALTVKAL. The span at 209-223 shows a compositional bias: polar residues; sequence QSPPFTETLDTSSKG. A disordered region spans residues 209 to 229; that stretch reads QSPPFTETLDTSSKGYQVPAY.

The protein belongs to the synaptogyrin family. In terms of assembly, interacts (via N-terminus) with SLC6A3 (via N-terminus). May interact with VMAT2. As to expression, specifically expressed in brain. Found in the brain across the dorsal and ventral corpus striatum as well as in the cortex.

The protein localises to the cytoplasmic vesicle. It localises to the secretory vesicle. It is found in the synaptic vesicle membrane. The protein resides in the synapse. Functionally, may play a role in regulated exocytosis. May indirectly regulate the activity of the plasma membrane dopamine transporter SLC6A3 and thereby regulate dopamine transport back from the synaptic cleft into the presynaptic terminal. The chain is Synaptogyrin-3 from Mus musculus (Mouse).